A 721-amino-acid chain; its full sequence is MTEHVFEATVNGKPFTIKTGRLAKQAAGAALVQYGETIVLVTVAAATEPKEDADFLPLSVEYQEKIYSAGRIPGNYFRREIGRPSEKETLTCRLTDRPIRPLFPAGYTFETQVITTVLSMDRENDPDVLSIVGASAALTISDLPFDGPLAAVRVGRLNGTLVANPTNTELDDCDINIVVAGSRSGVVMVEGGSNVVSEAEMLEAIFFGHNALLPLIDIQDQMRNACGKPKRVIVPPEKDTELETRIAELVGDAVAQAVTEPEKDARKSALSKVRENLFQGLGEAFADRKREIKGLFSDLVKKVCRDIVLNQGRRIDGRAFDEVRPISCEVGVLPRTHGSALFTRGETQVLGVMTLGSGHDEQRVETLFGDETRPFMLHYNFPPFCVGEVKRVMGPSRRDIGHGNLAHRGISYVLPDKETFDYTIRLVSEVLESNGSSSMGTVCSCILALMDGGVPIKAPVSGIAMGLVADGDKVAVLSDILGDEDHFGDMDFKVTGTEKGITALQMDIKIKSLSREILEKALHQAKDGRIHILGKMLEALSHYRDDISPYAPKIYIVKIHPDKIREIIGPGGKVIRELQAMSNTRIEVDDSGTVKIAASTEEEARIAIKAVEDIGRVPEPGEIYEGEVVRITDFGAFIQIKNGTDGLCHISELEHHHVKSVTDVVKMGDKVRVKVLEVSPEGKIRLSRKALLPAPEKGEEDEKSAPRSRRPGGNSDRRNNR.

Residues Asp485 and Asp491 each contribute to the Mg(2+) site. The KH domain maps to 552 to 611 (PKIYIVKIHPDKIREIIGPGGKVIRELQAMSNTRIEVDDSGTVKIAASTEEEARIAIKAV). Residues 621 to 689 (GEIYEGEVVR…PEGKIRLSRK (69 aa)) enclose the S1 motif domain. Residues 687-721 (SRKALLPAPEKGEEDEKSAPRSRRPGGNSDRRNNR) are disordered.

Belongs to the polyribonucleotide nucleotidyltransferase family. The cofactor is Mg(2+).

The protein localises to the cytoplasm. The enzyme catalyses RNA(n+1) + phosphate = RNA(n) + a ribonucleoside 5'-diphosphate. Its function is as follows. Involved in mRNA degradation. Catalyzes the phosphorolysis of single-stranded polyribonucleotides processively in the 3'- to 5'-direction. This chain is Polyribonucleotide nucleotidyltransferase, found in Desulfosudis oleivorans (strain DSM 6200 / JCM 39069 / Hxd3) (Desulfococcus oleovorans).